A 338-amino-acid polypeptide reads, in one-letter code: Fe(3+)-binding periplasmic protein (338 aa).

Positions 1 to 26 (MKLRISSLGPVALLASSMMLAFGAQA) are cleaved as a signal peptide. Fe cation contacts are provided by His40, Glu88, Tyr224, and Tyr225.

It belongs to the bacterial solute-binding protein 1 family. In terms of assembly, the complex is composed of two ATP-binding proteins (FbpC), two transmembrane proteins (FbpB) and a solute-binding protein (FbpA).

It is found in the periplasm. Functionally, part of the ABC transporter complex FbpABC (TC 3.A.1.10.1) involved in Fe(3+) ions import. This protein specifically binds Fe(3+) and is involved in its transmembrane transport. The chain is Fe(3+)-binding periplasmic protein (fbpA) from Serratia marcescens.